The primary structure comprises 163 residues: MASITQAAKSLLLKEFASAFALSMRQFFAPKATLNYPHEKGPVSPRFRGEHALRRYPNGEERCIACKLCEAICPAQAITIEAGPRRNDGTRRTVRYDIDMVKCIYCGFCQEACPVDAIVEGPNFEFATETREELYYDKDKLLANGDRWEREIARNIAMDAPYR.

4Fe-4S ferredoxin-type domains are found at residues 53–83 (LRRYPNGEERCIACKLCEAICPAQAITIEAG) and 94–123 (VRYDIDMVKCIYCGFCQEACPVDAIVEGPN). Residues C63, C66, C69, C73, C103, C106, C109, and C113 each contribute to the [4Fe-4S] cluster site.

This sequence belongs to the complex I 23 kDa subunit family. In terms of assembly, NDH-1 is composed of 14 different subunits. Subunits NuoA, H, J, K, L, M, N constitute the membrane sector of the complex. Requires [4Fe-4S] cluster as cofactor.

The protein resides in the cell inner membrane. It carries out the reaction a quinone + NADH + 5 H(+)(in) = a quinol + NAD(+) + 4 H(+)(out). In terms of biological role, NDH-1 shuttles electrons from NADH, via FMN and iron-sulfur (Fe-S) centers, to quinones in the respiratory chain. The immediate electron acceptor for the enzyme in this species is believed to be ubiquinone. Couples the redox reaction to proton translocation (for every two electrons transferred, four hydrogen ions are translocated across the cytoplasmic membrane), and thus conserves the redox energy in a proton gradient. The sequence is that of NADH-quinone oxidoreductase subunit I from Brucella canis (strain ATCC 23365 / NCTC 10854 / RM-666).